A 437-amino-acid chain; its full sequence is Elongation factor 1-gamma (437 aa).

The residue at position 2 (alanine 2) is an N-acetylalanine. A GST N-terminal domain is found at 2-87 (AAGTLYTYPE…YVSNEELRGS (86 aa)). Positions 88 to 216 (TPEAAAQVVQ…VKLCEKMAQF (129 aa)) constitute a GST C-terminal domain. N6-acetyllysine is present on residues lysine 147 and lysine 212. Basic and acidic residues predominate over residues 221–254 (FAETQPKKDTPRKEKGSREEKQKPQAERKEEKKA). The disordered stretch occupies residues 221-268 (FAETQPKKDTPRKEKGSREEKQKPQAERKEEKKAAAPAPEEEMDECEQ). Lysine 253 participates in a covalent cross-link: Glycyl lysine isopeptide (Lys-Gly) (interchain with G-Cter in SUMO1). The EF-1-gamma C-terminal domain occupies 276–437 (AKDPFAHLPK…KAFNQGKIFK (162 aa)). Lysine 285 is covalently cross-linked (Glycyl lysine isopeptide (Lys-Gly) (interchain with G-Cter in SUMO2)). Lysine 401 bears the N6-acetyllysine mark. The residue at position 434 (lysine 434) is an N6-acetyllysine; alternate. At lysine 434 the chain carries N6-malonyllysine; alternate.

EF-1 is composed of four subunits: alpha, beta, delta, and gamma.

Functionally, probably plays a role in anchoring the complex to other cellular components. In Macaca fascicularis (Crab-eating macaque), this protein is Elongation factor 1-gamma (EEF1G).